The following is a 505-amino-acid chain: ATP synthase subunit alpha (505 aa).

169–176 lines the ATP pocket; sequence GDRQTGKT.

This sequence belongs to the ATPase alpha/beta chains family. In terms of assembly, F-type ATPases have 2 components, CF(1) - the catalytic core - and CF(0) - the membrane proton channel. CF(1) has five subunits: alpha(3), beta(3), gamma(1), delta(1), epsilon(1). CF(0) has three main subunits: a(1), b(2) and c(9-12). The alpha and beta chains form an alternating ring which encloses part of the gamma chain. CF(1) is attached to CF(0) by a central stalk formed by the gamma and epsilon chains, while a peripheral stalk is formed by the delta and b chains.

It is found in the cell membrane. The enzyme catalyses ATP + H2O + 4 H(+)(in) = ADP + phosphate + 5 H(+)(out). Functionally, produces ATP from ADP in the presence of a proton gradient across the membrane. The alpha chain is a regulatory subunit. The sequence is that of ATP synthase subunit alpha from Alkaliphilus oremlandii (strain OhILAs) (Clostridium oremlandii (strain OhILAs)).